Here is a 445-residue protein sequence, read N- to C-terminus: Methylphloroacetophenone oxidase (445 aa).

A helical membrane pass occupies residues 25–45 (VLSIALIGVACAISIRSILYV). The N-linked (GlcNAc...) asparagine glycan is linked to Asn51.

It belongs to the cytochrome P450 family.

The protein localises to the membrane. The protein operates within secondary metabolite biosynthesis. Its function is as follows. Methylphloroacetophenone oxidase; part of the gene cluster that mediates the biosynthesis of usnic acid, a dibenzofuran lichen product possessing a broad spectrum of biological activities. Two genes, mpas and mpao, comprise the usnic acid biosynthetic gene cluster with a single post-PKS enzyme, the methylphloracetophenone oxidase (mpao). The methylphloroacetophenone synthase (mpas) is a non-reducing polyketide synthase that produces methylphloracetophenone from acetate via a methylated tetraketide intermediate. The methylphloroacetophenone oxidase then carries out the oxidative dimerization of methylphloracetophenone to usnic acid. In Cladonia uncialis (Cup lichen), this protein is Methylphloroacetophenone oxidase.